A 230-amino-acid polypeptide reads, in one-letter code: 2,3-bisphosphoglycerate-dependent phosphoglycerate mutase (230 aa).

Substrate contacts are provided by residues 8–15 (RHGESEWN), 21–22 (TG), Arg60, 87–90 (ERHY), Lys98, 114–115 (RR), and 183–184 (GN). The active-site Tele-phosphohistidine intermediate is the His9. Glu87 (proton donor/acceptor) is an active-site residue.

The protein belongs to the phosphoglycerate mutase family. BPG-dependent PGAM subfamily.

It carries out the reaction (2R)-2-phosphoglycerate = (2R)-3-phosphoglycerate. It participates in carbohydrate degradation; glycolysis; pyruvate from D-glyceraldehyde 3-phosphate: step 3/5. In terms of biological role, catalyzes the interconversion of 2-phosphoglycerate and 3-phosphoglycerate. This Streptococcus thermophilus (strain CNRZ 1066) protein is 2,3-bisphosphoglycerate-dependent phosphoglycerate mutase.